Consider the following 93-residue polypeptide: MTKSELIESLASKNPSLPIKMVEHCVKELLEQLTATLEEGERIEVRGFGSFSLHYRQPRLGRNPKTGESVLLGAKYVPHFKAGKDLKERVDLL.

The protein belongs to the bacterial histone-like protein family. Heterodimer of an alpha and a beta chain.

In terms of biological role, this protein is one of the two subunits of integration host factor, a specific DNA-binding protein that functions in genetic recombination as well as in transcriptional and translational control. The protein is Integration host factor subunit beta (ihfB) of Mannheimia haemolytica (Pasteurella haemolytica).